The primary structure comprises 229 residues: Uracil-DNA glycosylase (229 aa).

D70 functions as the Proton acceptor in the catalytic mechanism.

Belongs to the uracil-DNA glycosylase (UDG) superfamily. UNG family.

It is found in the cytoplasm. It catalyses the reaction Hydrolyzes single-stranded DNA or mismatched double-stranded DNA and polynucleotides, releasing free uracil.. Excises uracil residues from the DNA which can arise as a result of misincorporation of dUMP residues by DNA polymerase or due to deamination of cytosine. The chain is Uracil-DNA glycosylase from Chlamydia trachomatis serovar A (strain ATCC VR-571B / DSM 19440 / HAR-13).